We begin with the raw amino-acid sequence, 230 residues long: Ureidoacrylate amidohydrolase RutB (230 aa).

Asp24 serves as the catalytic Proton acceptor. Lys133 is a catalytic residue. Cys166 acts as the Nucleophile in catalysis.

The protein belongs to the isochorismatase family. RutB subfamily.

The catalysed reaction is (Z)-3-ureidoacrylate + H2O + H(+) = (Z)-3-aminoacrylate + NH4(+) + CO2. It carries out the reaction (Z)-3-ureidoacrylate + H2O = (Z)-3-aminoacrylate + carbamate + H(+). It catalyses the reaction (Z)-2-methylureidoacrylate + H2O + H(+) = (Z)-2-methylaminoacrylate + NH4(+) + CO2. Hydrolyzes ureidoacrylate to form aminoacrylate and carbamate. The carbamate hydrolyzes spontaneously, thereby releasing one of the nitrogen atoms of the pyrimidine ring as ammonia and one of its carbon atoms as CO2. This Escherichia coli O157:H7 protein is Ureidoacrylate amidohydrolase RutB.